We begin with the raw amino-acid sequence, 199 residues long: MPNILPGPLRGFGVTFGTMFRRVTTEQYPDEKKPTMPRYHGRHVLNRHPDGLEKCIGCELCAWACPADAIYVEGADNTEEERYSPGERYGRVYQINYLRCIFCGYCIEACPTRALTMSNEYELADDNRADLIYTKEQLLAPLAPGMEPPPHPMRLGDTKDYYRGTPAAHMLSGEDDAASETTLDRSDDHSATYEEAERP.

4Fe-4S ferredoxin-type domains are found at residues 45–75 and 91–120; these read LNRHPDGLEKCIGCELCAWACPADAIYVEGA and RVYQINYLRCIFCGYCIEACPTRALTMSNE. [4Fe-4S] cluster is bound by residues cysteine 55, cysteine 58, cysteine 61, cysteine 65, cysteine 100, cysteine 103, cysteine 106, and cysteine 110. The segment at 164 to 199 is disordered; sequence GTPAAHMLSGEDDAASETTLDRSDDHSATYEEAERP. Over residues 182-199 the composition is skewed to basic and acidic residues; the sequence is TLDRSDDHSATYEEAERP.

The protein belongs to the complex I 23 kDa subunit family. In terms of assembly, NDH-1 is composed of 14 different subunits. Subunits NuoA, H, J, K, L, M, N constitute the membrane sector of the complex. It depends on [4Fe-4S] cluster as a cofactor.

The protein localises to the cell membrane. The enzyme catalyses a quinone + NADH + 5 H(+)(in) = a quinol + NAD(+) + 4 H(+)(out). In terms of biological role, NDH-1 shuttles electrons from NADH, via FMN and iron-sulfur (Fe-S) centers, to quinones in the respiratory chain. The immediate electron acceptor for the enzyme in this species is believed to be ubiquinone. Couples the redox reaction to proton translocation (for every two electrons transferred, four hydrogen ions are translocated across the cytoplasmic membrane), and thus conserves the redox energy in a proton gradient. The chain is NADH-quinone oxidoreductase subunit I from Acidothermus cellulolyticus (strain ATCC 43068 / DSM 8971 / 11B).